We begin with the raw amino-acid sequence, 571 residues long: Proline--tRNA ligase (571 aa).

Belongs to the class-II aminoacyl-tRNA synthetase family. ProS type 1 subfamily. In terms of assembly, homodimer.

The protein resides in the cytoplasm. The enzyme catalyses tRNA(Pro) + L-proline + ATP = L-prolyl-tRNA(Pro) + AMP + diphosphate. Catalyzes the attachment of proline to tRNA(Pro) in a two-step reaction: proline is first activated by ATP to form Pro-AMP and then transferred to the acceptor end of tRNA(Pro). As ProRS can inadvertently accommodate and process non-cognate amino acids such as alanine and cysteine, to avoid such errors it has two additional distinct editing activities against alanine. One activity is designated as 'pretransfer' editing and involves the tRNA(Pro)-independent hydrolysis of activated Ala-AMP. The other activity is designated 'posttransfer' editing and involves deacylation of mischarged Ala-tRNA(Pro). The misacylated Cys-tRNA(Pro) is not edited by ProRS. This is Proline--tRNA ligase from Proteus mirabilis (strain HI4320).